Consider the following 312-residue polypeptide: tRNA dimethylallyltransferase (312 aa).

Residue 12-19 (GPTAIGKS) participates in ATP binding. Residue 14–19 (TAIGKS) coordinates substrate. Interaction with substrate tRNA stretches follow at residues 38 to 41 (DSKL) and 162 to 166 (QRVLR).

This sequence belongs to the IPP transferase family. In terms of assembly, monomer. Mg(2+) is required as a cofactor.

The catalysed reaction is adenosine(37) in tRNA + dimethylallyl diphosphate = N(6)-dimethylallyladenosine(37) in tRNA + diphosphate. Functionally, catalyzes the transfer of a dimethylallyl group onto the adenine at position 37 in tRNAs that read codons beginning with uridine, leading to the formation of N6-(dimethylallyl)adenosine (i(6)A). In Buchnera aphidicola subsp. Cinara cedri (strain Cc), this protein is tRNA dimethylallyltransferase.